The sequence spans 1493 residues: Son of sevenless homolog (1493 aa).

One can recognise a DH domain in the interval threonine 244–methionine 448. One can recognise a PH domain in the interval glutamate 496 to threonine 606. One can recognise an N-terminal Ras-GEF domain in the interval glycine 656–valine 824. The Ras-GEF domain occupies histidine 897–lysine 1164. Disordered regions lie at residues lysine 1067–asparagine 1091, glycine 1165–proline 1248, and histidine 1263–lysine 1493. Residues glutamine 1079 to aspartate 1088 show a composition bias toward basic and acidic residues. Polar residues-rich tracts occupy residues histidine 1208–leucine 1231 and serine 1279–leucine 1289. Over residues serine 1308–glycine 1326 the composition is skewed to low complexity. Polar residues predominate over residues leucine 1350–alanine 1361. Low complexity predominate over residues serine 1381 to threonine 1400. The segment covering glutamate 1402–histidine 1417 has biased composition (basic and acidic residues). Over residues proline 1426 to arginine 1435 the composition is skewed to pro residues. Polar residues predominate over residues histidine 1453–glutamine 1464.

In terms of assembly, interacts with cmd-1 in the presence of Ca(2+).

In terms of biological role, promotes the exchange of Ras-bound GDP by GTP. May regulate signaling pathways downstream of receptor tyrosine kinase, egl-15 and let-23. Required for larval and male spicule development, fluid homeostasis, vulva induction, spermatogenesis, and oogenesis by promoting meiosis prophase exit during oocyte maturation. Required for the delamination of G1 cell by promoting the loss of cell junctions and detachment from the excretory system during larval development. Plays a role in nicotinic acetylcholine receptor (nAChR)-mediated sensitivity to nicotine. Regulates synaptic levels of nAchR subunit lev-1 in the nerve cord. The protein is Son of sevenless homolog of Caenorhabditis elegans.